The sequence spans 192 residues: Peptidyl-tRNA hydrolase (192 aa).

Tyr14 lines the tRNA pocket. His19 acts as the Proton acceptor in catalysis. TRNA-binding residues include Tyr64, Asn66, and Asn112.

It belongs to the PTH family. Monomer.

It localises to the cytoplasm. It carries out the reaction an N-acyl-L-alpha-aminoacyl-tRNA + H2O = an N-acyl-L-amino acid + a tRNA + H(+). Functionally, hydrolyzes ribosome-free peptidyl-tRNAs (with 1 or more amino acids incorporated), which drop off the ribosome during protein synthesis, or as a result of ribosome stalling. In terms of biological role, catalyzes the release of premature peptidyl moieties from peptidyl-tRNA molecules trapped in stalled 50S ribosomal subunits, and thus maintains levels of free tRNAs and 50S ribosomes. The chain is Peptidyl-tRNA hydrolase from Prosthecochloris aestuarii (strain DSM 271 / SK 413).